A 339-amino-acid chain; its full sequence is DNA-directed RNA polymerase subunit alpha (339 aa).

The segment at 1 to 233 (MVREEVAGST…DLFLPFLHAE (233 aa)) is alpha N-terminal domain (alpha-NTD). The alpha C-terminal domain (alpha-CTD) stretch occupies residues 264 to 339 (KKGIPLNCIF…IDLLKNKLSF (76 aa)).

The protein belongs to the RNA polymerase alpha chain family. In plastids the minimal PEP RNA polymerase catalytic core is composed of four subunits: alpha, beta, beta', and beta''. When a (nuclear-encoded) sigma factor is associated with the core the holoenzyme is formed, which can initiate transcription.

The protein localises to the plastid. The protein resides in the chloroplast. It catalyses the reaction RNA(n) + a ribonucleoside 5'-triphosphate = RNA(n+1) + diphosphate. Its function is as follows. DNA-dependent RNA polymerase catalyzes the transcription of DNA into RNA using the four ribonucleoside triphosphates as substrates. The sequence is that of DNA-directed RNA polymerase subunit alpha from Agropyron cristatum (Crested wheatgrass).